Reading from the N-terminus, the 363-residue chain is NAD(P)H-quinone oxidoreductase subunit 1, chloroplastic (363 aa).

6 helical membrane-spanning segments follow: residues 30-50 (LVPI…IVWL), 104-124 (IAVI…HLVL), 127-147 (LGIG…GLLM), 253-273 (FGLF…FVTV), 300-320 (VFGT…FLFI), and 343-363 (FLLP…LLSL).

Belongs to the complex I subunit 1 family. As to quaternary structure, NDH is composed of at least 16 different subunits, 5 of which are encoded in the nucleus.

Its subcellular location is the plastid. It is found in the chloroplast thylakoid membrane. It catalyses the reaction a plastoquinone + NADH + (n+1) H(+)(in) = a plastoquinol + NAD(+) + n H(+)(out). The catalysed reaction is a plastoquinone + NADPH + (n+1) H(+)(in) = a plastoquinol + NADP(+) + n H(+)(out). Functionally, NDH shuttles electrons from NAD(P)H:plastoquinone, via FMN and iron-sulfur (Fe-S) centers, to quinones in the photosynthetic chain and possibly in a chloroplast respiratory chain. The immediate electron acceptor for the enzyme in this species is believed to be plastoquinone. Couples the redox reaction to proton translocation, and thus conserves the redox energy in a proton gradient. The polypeptide is NAD(P)H-quinone oxidoreductase subunit 1, chloroplastic (Piper cenocladum (Ant piper)).